Here is a 341-residue protein sequence, read N- to C-terminus: Protein arginine N-methyltransferase 1 (341 aa).

The 296-residue stretch at 20–315 (ADYYFDSYSH…DCAPFDKNQR (296 aa)) folds into the SAM-dependent MTase PRMT-type domain. Residues H33, R42, G66, D88, and E117 each contribute to the S-adenosyl-L-methionine site. Active-site residues include E132 and E141.

It belongs to the class I-like SAM-binding methyltransferase superfamily. Protein arginine N-methyltransferase family.

Its subcellular location is the nucleus. The protein resides in the cytoplasm. It localises to the cytosol. The catalysed reaction is L-arginyl-[protein] + 2 S-adenosyl-L-methionine = N(omega),N(omega)-dimethyl-L-arginyl-[protein] + 2 S-adenosyl-L-homocysteine + 2 H(+). It catalyses the reaction L-arginyl-[protein] + S-adenosyl-L-methionine = N(omega)-methyl-L-arginyl-[protein] + S-adenosyl-L-homocysteine + H(+). Its function is as follows. Arginine methyltransferase that methylates the guanidino nitrogens of arginyl residues present in proteins such as ribonucleoproteins and histones. This chain is Protein arginine N-methyltransferase 1 (prmt1), found in Dictyostelium discoideum (Social amoeba).